We begin with the raw amino-acid sequence, 176 residues long: MGPAEAGRRGAASPVPPPLVRVAPSLFLGSARAAGAEEQLARAGVTLCVNVSRQQPGPRAPGVAELRVPVFDDPAEDLLAHLEPTCAAMEAAVRAGGACLVYCKNGRSRSAAVCTAYLMRHRGLSLAKAFQMVKSARPVAEPNPGFWSQLQKYEEALQAQSCLQGEPPALGLGPEA.

The 143-residue stretch at 17–159 folds into the Tyrosine-protein phosphatase domain; the sequence is PPLVRVAPSL…LQKYEEALQA (143 aa). The active-site Phosphocysteine intermediate is the Cys-103.

It belongs to the protein-tyrosine phosphatase family. Non-receptor class dual specificity subfamily. In terms of assembly, monomer.

The catalysed reaction is O-phospho-L-tyrosyl-[protein] + H2O = L-tyrosyl-[protein] + phosphate. It catalyses the reaction O-phospho-L-seryl-[protein] + H2O = L-seryl-[protein] + phosphate. The enzyme catalyses O-phospho-L-threonyl-[protein] + H2O = L-threonyl-[protein] + phosphate. Has phosphatase activity with the synthetic substrate 6,8-difluoro-4-methylumbelliferyl phosphate (in vitro). Has almost no detectable activity with phosphotyrosine, even less activity with phosphothreonine and displays complete lack of activity with phosphoserine. The poor activity with phosphotyrosine may be due to steric hindrance by bulky amino acid sidechains that obstruct access to the active site. The chain is Dual specificity phosphatase 28 (DUSP28) from Homo sapiens (Human).